The primary structure comprises 269 residues: Diaminopimelate epimerase (269 aa).

Positions 20 and 63 each coordinate substrate. The active-site Proton donor is the C72. Substrate is bound by residues 73–74 (GN), N179, and 197–198 (ER). The active-site Proton acceptor is the C207. 208 to 209 (GT) is a binding site for substrate.

Belongs to the diaminopimelate epimerase family. Homodimer.

The protein resides in the cytoplasm. The enzyme catalyses (2S,6S)-2,6-diaminopimelate = meso-2,6-diaminopimelate. It participates in amino-acid biosynthesis; L-lysine biosynthesis via DAP pathway; DL-2,6-diaminopimelate from LL-2,6-diaminopimelate: step 1/1. Functionally, catalyzes the stereoinversion of LL-2,6-diaminopimelate (L,L-DAP) to meso-diaminopimelate (meso-DAP), a precursor of L-lysine and an essential component of the bacterial peptidoglycan. The protein is Diaminopimelate epimerase of Chlamydia muridarum (strain MoPn / Nigg).